We begin with the raw amino-acid sequence, 326 residues long: Putative HTH-type transcriptional regulatory protein MmarC7_1702 (326 aa).

The HTH cro/C1-type domain maps to 128 to 183 (LRETREKLKISVGELAEISRVSRKTIYKYEQNEANPSAEVAIKIEEYLDVPLIKGI). The segment at residues 139 to 158 (VGELAEISRVSRKTIYKYEQ) is a DNA-binding region (H-T-H motif).

The sequence is that of Putative HTH-type transcriptional regulatory protein MmarC7_1702 from Methanococcus maripaludis (strain C7 / ATCC BAA-1331).